Here is a 507-residue protein sequence, read N- to C-terminus: MADFIGAVDQGTTSTRFMIFDHGGNEVAKHQLEHEQILPRSGWVEHDPVEIWERTNSVMQNALRNGGLSGTDLAAIGITNQRETTVVWDPRTGRPYYNAIVWQDTRTDAIAANLERSGRGDVIRRKAGLPPATYFSGGKIQWILENVDGVREAAEQGHAVFGNTDSWVLWNLTGGPDGGIHATDVTNASRTMLMNLETLDWDDELLGFFGIPRGMLPTINPSSHPEAFGTTRTSRPLRAAVPITGVLGDQHAATVGQVCFSPGEAKNTYGTGNFLVLNTGTELVRSQHGLLTTVAYQFGDNPPVYALEGSIAVTGSAVQWLRDQMKIIKTAAESEELARTVEDNGGMYFVPAFSGLFAPYWRSDARGAIVGLARYNDNAHLARATLEAICYQSRDVVVAMEQDSSVHLDVLRVDGGVTANDLCMQIQADILGVPVSRPVVAETTALGAAYAAGLATGFWRHTDELRTHWSESRRWEPQWSEERRAQGYAGWKMAVERTLDWVKVPES.

Thr12 contributes to the ADP binding site. The ATP site is built by Thr12, Thr13, and Ser14. Residue Thr12 participates in sn-glycerol 3-phosphate binding. Arg16 is a binding site for ADP. 4 residues coordinate sn-glycerol 3-phosphate: Arg82, Glu83, Tyr134, and Asp249. Glycerol contacts are provided by Arg82, Glu83, Tyr134, Asp249, and Gln250. ADP-binding residues include Thr271 and Gly315. Positions 271, 315, 319, and 416 each coordinate ATP. ADP is bound by residues Gly416 and Asn420.

This sequence belongs to the FGGY kinase family.

The catalysed reaction is glycerol + ATP = sn-glycerol 3-phosphate + ADP + H(+). It participates in polyol metabolism; glycerol degradation via glycerol kinase pathway; sn-glycerol 3-phosphate from glycerol: step 1/1. Its activity is regulated as follows. Inhibited by fructose 1,6-bisphosphate (FBP). Functionally, key enzyme in the regulation of glycerol uptake and metabolism. Catalyzes the phosphorylation of glycerol to yield sn-glycerol 3-phosphate. The chain is Glycerol kinase 1 from Streptomyces coelicolor (strain ATCC BAA-471 / A3(2) / M145).